A 123-amino-acid polypeptide reads, in one-letter code: Large ribosomal subunit protein uL18 (123 aa).

The protein belongs to the universal ribosomal protein uL18 family. Part of the 50S ribosomal subunit; part of the 5S rRNA/L5/L18/L25 subcomplex. Contacts the 5S and 23S rRNAs.

This is one of the proteins that bind and probably mediate the attachment of the 5S RNA into the large ribosomal subunit, where it forms part of the central protuberance. The chain is Large ribosomal subunit protein uL18 from Chlamydia abortus (strain DSM 27085 / S26/3) (Chlamydophila abortus).